Consider the following 567-residue polypeptide: NAC domain-containing protein 78 (567 aa).

In terms of domain architecture, NAC spans 9–159 (LAPGFRFHPT…AYVLCRIFQK (151 aa)). Residues 108–165 (VGMKKTLVYHKGRAPRGERTNWVMHEYRLSDEDLKKAGVPQEAYVLCRIFQKSGTGPK) mediate DNA binding. Positions 393–436 (NQEALDQKPAPKELEKEVAGGKEAVEEKESGEGSSSKQDTDFKD) are disordered. Residues 397 to 423 (LDQKPAPKELEKEVAGGKEAVEEKESG) are compositionally biased toward basic and acidic residues. A helical membrane pass occupies residues 544 to 564 (LVFMCLWVLLLSVSFKIVTMV).

As to expression, expressed in root meristem. Expressed in roots, rosette leaves, cauline leaves, shoot apex, stems and flowers.

The protein resides in the membrane. The protein localises to the nucleus. Its function is as follows. Transcriptional activator activated by proteolytic cleavage through regulated intramembrane proteolysis (RIP). Transcripition activator associated with the induction of genes related to flavonoid biosynthesis and required for the accumulation of anthocyanins in response to high light stress. Plays a role in the regulation of 20S and 26S proteasomes in response to high light stress. This is NAC domain-containing protein 78 (NAC078) from Arabidopsis thaliana (Mouse-ear cress).